The chain runs to 24 residues: Attacin (24 aa).

The protein belongs to the attacin/sarcotoxin-2 family.

It localises to the secreted. Its function is as follows. Hemolymph antibacterial protein. This chain is Attacin, found in Heliothis virescens (Tobacco budworm moth).